The primary structure comprises 221 residues: Germin-like protein subfamily 1 member 15 (221 aa).

A signal peptide spans 1 to 21; the sequence is MKVSMSLILITFWALVTIAKA. A disulfide bond links C31 and C48. The 152-residue stretch at 62–213 folds into the Cupin type-1 domain; the sequence is SGLNQAGITN…AFQLDVNVVK (152 aa). N77 carries N-linked (GlcNAc...) asparagine glycosylation. Residues H110, H112, E117, and H159 each contribute to the Mn(2+) site.

This sequence belongs to the germin family. Oligomer (believed to be a pentamer but probably hexamer).

The protein resides in the secreted. Its subcellular location is the extracellular space. It is found in the apoplast. May play a role in plant defense. Probably has no oxalate oxidase activity even if the active site is conserved. The chain is Germin-like protein subfamily 1 member 15 from Arabidopsis thaliana (Mouse-ear cress).